The primary structure comprises 193 residues: Probable molybdenum cofactor guanylyltransferase (193 aa).

GTP contacts are provided by residues 9–11 (TAG), Lys21, Asp64, and Asp93. Residue Asp93 participates in Mg(2+) binding.

The protein belongs to the MobA family. Mg(2+) serves as cofactor.

The protein resides in the cytoplasm. It catalyses the reaction Mo-molybdopterin + GTP + H(+) = Mo-molybdopterin guanine dinucleotide + diphosphate. Its function is as follows. Transfers a GMP moiety from GTP to Mo-molybdopterin (Mo-MPT) cofactor (Moco or molybdenum cofactor) to form Mo-molybdopterin guanine dinucleotide (Mo-MGD) cofactor. The polypeptide is Probable molybdenum cofactor guanylyltransferase (Deinococcus radiodurans (strain ATCC 13939 / DSM 20539 / JCM 16871 / CCUG 27074 / LMG 4051 / NBRC 15346 / NCIMB 9279 / VKM B-1422 / R1)).